Here is an 894-residue protein sequence, read N- to C-terminus: MALASAAPGSIFCKQLLFSLLVLTLLCDACQKVYLRVPSHLQAETLVGKVNLEECLKSASLIRSSDPAFRILEDGSIYTTHDLILSSERKSFSIFLSDGQRREQQEIKVVLSARENKSPKKRHTKDTALKRSKRRWAPIPASLMENSLGPFPQHVQQIQSDAAQNYTIFYSISGPGVDKEPFNLFYIEKDTGDIFCTRSIDREKYEQFALYGYATTADGYAPEYPLPLIIKIEDDNDNAPYFEHRVTIFTVPENCRSGTSVGKVTATDLDEPDTLHTRLKYKILQQIPDHPKHFSIHPDTGVITTTTPFLDREKCDTYQLIMEVRDMGGQPFGLFNTGTITISLEDENDNPPSFTETSYVTEVEENRIDVEILRMKVQDQDLPNTPHSKAVYKILQGNENGNFIISTDPNTNEGVLCVVKPLNYEVNRQVILQVGVINEAQFSKAASSQTPTMCTTTVTVKIIDSDEGPECHPPVKVIQSQDGFPAGQELLGYKALDPEISSGEGLRYQKLGDEDNWFEINQHTGDLRTLKVLDRESKFVKNNQYNISVVAVDAVGRSCTGTLVVHLDDYNDHAPQIDKEVTICQNNEDFAVLKPVDPDGPENGPPFQFFLDNSASKNWNIEEKDGKTAILRQRQNLDYNYYSVPIQIKDRHGLVATHMLTVRVCDCSTPSECRMKDKSTRDVRPNVILGRWAILAMVLGSVLLLCILFTCFCVTAKRTVKKCFPEDIAQQNLIVSNTEGPGEEVTEANIRLPMQTSNICDTSMSVGTVGGQGIKTQQSFEMVKGGYTLDSNKGGGHQTLESVKGVGQGDTGRYAYTDWQSFTQPRLGEKVYLCGQDEEHKHCEDYVCSYNYEGKGSLAGSVGCCSDRQEEEGLEFLDHLEPKFRTLAKTCIKK.

Residues 1-29 (MALASAAPGSIFCKQLLFSLLVLTLLCDA) form the signal peptide. The propeptide occupies 30-134 (CQKVYLRVPS…KDTALKRSKR (105 aa)). Cadherin domains follow at residues 135–242 (RWAP…APYF), 243–354 (EHRV…PPSF), 355–471 (TETS…GPEC), 472–575 (HPPV…DHAP), and 576–682 (QIDK…STRD). At 135 to 691 (RWAPIPASLM…DVRPNVILGR (557 aa)) the chain is on the extracellular side. Asn165 carries an N-linked (GlcNAc...) asparagine glycan. A Phosphothreonine modification is found at Thr385. The N-linked (GlcNAc...) asparagine glycan is linked to Asn546. A helical transmembrane segment spans residues 692–714 (WAILAMVLGSVLLLCILFTCFCV). Residues 715 to 894 (TAKRTVKKCF…RTLAKTCIKK (180 aa)) are Cytoplasmic-facing.

As to quaternary structure, binds to JUP/plakoglobin. As to expression, strongly expressed in epidermis, less in lymph node and tongue.

It localises to the cell membrane. The protein resides in the cell junction. Its subcellular location is the desmosome. Functionally, a component of desmosome cell-cell junctions which are required for positive regulation of cellular adhesion. Required for desmosome adhesion strength between the granular layers of the epidermis, as a result moderates epidermal proliferation and differentiation. Is therefore required to maintain postnatal epidermal barrier function and normal hair follicle morphology into adulthood. The protein is Desmocollin-1 (DSC1) of Homo sapiens (Human).